A 71-amino-acid polypeptide reads, in one-letter code: Exodeoxyribonuclease 7 small subunit (71 aa).

This sequence belongs to the XseB family. As to quaternary structure, heterooligomer composed of large and small subunits.

Its subcellular location is the cytoplasm. It carries out the reaction Exonucleolytic cleavage in either 5'- to 3'- or 3'- to 5'-direction to yield nucleoside 5'-phosphates.. In terms of biological role, bidirectionally degrades single-stranded DNA into large acid-insoluble oligonucleotides, which are then degraded further into small acid-soluble oligonucleotides. The protein is Exodeoxyribonuclease 7 small subunit of Streptococcus uberis (strain ATCC BAA-854 / 0140J).